The primary structure comprises 311 residues: L-lactate dehydrogenase (311 aa).

Residues V12, D33, K38, Y63, and 77–78 (GA) contribute to the NAD(+) site. Substrate-binding positions include Q80, R86, and 118-121 (NPVD). NAD(+)-binding positions include 116–118 (VTN) and S141. Position 146–149 (146–149 (DSAR)) interacts with substrate. Beta-D-fructose 1,6-bisphosphate contacts are provided by R151 and H166. The active-site Proton acceptor is H173. At Y219 the chain carries Phosphotyrosine. T228 is a binding site for substrate.

This sequence belongs to the LDH/MDH superfamily. LDH family. In terms of assembly, homotetramer.

It is found in the cytoplasm. It carries out the reaction (S)-lactate + NAD(+) = pyruvate + NADH + H(+). The protein operates within fermentation; pyruvate fermentation to lactate; (S)-lactate from pyruvate: step 1/1. Allosterically activated by fructose 1,6-bisphosphate (FBP). Its function is as follows. Catalyzes the conversion of lactate to pyruvate. The polypeptide is L-lactate dehydrogenase (Thermoanaerobacter pseudethanolicus (strain ATCC 33223 / 39E) (Clostridium thermohydrosulfuricum)).